Consider the following 767-residue polypeptide: Photosystem I P700 chlorophyll a apoprotein A1 (767 aa).

Transmembrane regions (helical) follow at residues 72–95, 158–181, 197–221, 305–323, 364–387, 403–429, 451–473, and 548–566; these read IFSA…FHGA, LMAL…FHYH, LNHH…HVSA, IAHH…GHMY, WHAQ…QHMY, IGLF…IAMV, AIIS…LYIH, and FMVH…LILL. Residues Cys-590 and Cys-599 each coordinate [4Fe-4S] cluster. The next 2 helical transmembrane spans lie at 606 to 627 and 681 to 703; these read HVFL…HFSW and TSAY…MFLF. His-692 lines the chlorophyll a' pocket. Chlorophyll a contacts are provided by Met-700 and Tyr-708. Trp-709 contributes to the phylloquinone binding site. The chain crosses the membrane as a helical span at residues 741–761; it reads AVGVAHYLLGGIATTWAFFHA.

Belongs to the PsaA/PsaB family. In terms of assembly, the PsaA/B heterodimer binds the P700 chlorophyll special pair and subsequent electron acceptors. PSI consists of a core antenna complex that captures photons, and an electron transfer chain that converts photonic excitation into a charge separation. The cyanobacterial PSI reaction center is composed of one copy each of PsaA,B,C,D,E,F,I,J,K,L,M and X, and forms trimeric complexes. The cofactor is PSI electron transfer chain: 5 chlorophyll a, 1 chlorophyll a', 2 phylloquinones and 3 4Fe-4S clusters. PSI core antenna: 90 chlorophyll a, 22 carotenoids, 3 phospholipids and 1 galactolipid. P700 is a chlorophyll a/chlorophyll a' dimer, A0 is one or more chlorophyll a, A1 is one or both phylloquinones and FX is a shared 4Fe-4S iron-sulfur center..

The protein localises to the cellular thylakoid membrane. The catalysed reaction is reduced [plastocyanin] + hnu + oxidized [2Fe-2S]-[ferredoxin] = oxidized [plastocyanin] + reduced [2Fe-2S]-[ferredoxin]. Functionally, psaA and PsaB bind P700, the primary electron donor of photosystem I (PSI), as well as the electron acceptors A0, A1 and FX. PSI is a plastocyanin/cytochrome c6-ferredoxin oxidoreductase, converting photonic excitation into a charge separation, which transfers an electron from the donor P700 chlorophyll pair to the spectroscopically characterized acceptors A0, A1, FX, FA and FB in turn. Oxidized P700 is reduced on the lumenal side of the thylakoid membrane by plastocyanin or cytochrome c6. The sequence is that of Photosystem I P700 chlorophyll a apoprotein A1 from Parasynechococcus marenigrum (strain WH8102).